The chain runs to 425 residues: Intermediate conductance calcium-activated potassium channel protein 4 (425 aa).

Residues 30 to 50 (LVLAGTGIGLMVLHAEMLWFL) traverse the membrane as a helical segment. The chain crosses the membrane as a helical span at residues 59-79 (LLVKCLITLSTAFLLCLIVVF). Residues 105-121 (VAQILLELLVCGVHPVP) form a helical membrane-spanning segment. The helical transmembrane segment at 141–161 (GFLGEGEALLSLAMLLRLYLV) threads the bilayer. A helical transmembrane segment spans residues 205 to 225 (LLLGLTLGLWLTTAWVLSVAE). An intramembrane region (pore-forming) is located at residues 239–259 (LWLIPITFLTIGYGDVVPGTL). A helical membrane pass occupies residues 263–283 (IVCLCTGVMGVCCTALLVAVV). The segment at 284–345 (ARKLEFNKAE…RRHQRKMLAA (62 aa)) is calmodulin-binding. H356 is subject to Phosphohistidine.

Belongs to the potassium channel KCNN family. KCa3.1/KCNN4 subfamily. In terms of assembly, homodimer. Homotetramer. Heterotetramer of potassium channel proteins. Interacts with MTMR6; this interaction leads to selective dephosphorylation of PI(3)P in a lipid microdomain adjacent to KCNN4, resulting in a decrease of intermediate conductance calcium-activated potassium channel activity. Interacts (via the C-tail domain) with CALM1; the calmodulin binding is constitutive, does not require calcium and mediates calcium-dependent gating and four calmodulin molecules bind to one channel tetramer. In terms of processing, phosphorylation at His-356 by NDKB activates the intermediate conductance calcium-activated potassium channel activity, and conversely it's dephosphorylation by PHPT1 inhibits this activity.

The protein resides in the cell membrane. It localises to the cell projection. Its subcellular location is the ruffle membrane. The enzyme catalyses K(+)(in) = K(+)(out). Functionally, intermediate conductance calcium-activated potassium channel that mediates the voltage-independent transmembrane transfer of potassium across the cell membrane through a constitutive interaction with calmodulin which binds the intracellular calcium allowing its opening. The current is characterized by a voltage-independent activation, an intracellular calcium concentration increase-dependent activation and a single-channel conductance of about 25 picosiemens. Also presents an inwardly rectifying current, thus reducing its already small outward conductance of potassium ions, which is particularly the case when the membrane potential displays positive values, above + 20 mV. Controls calcium influx during vascular contractility by being responsible of membrane hyperpolarization induced by vasoactive factors in proliferative vascular smooth muscle cell types. Following calcium influx, the consecutive activation of KCNN4 channel leads to a hyperpolarization of the cell membrane potential and hence an increase of the electrical driving force for further calcium influx promoting sustained calcium entry in response to stimulation with chemotactic peptides. Required for maximal calcium influx and proliferation during the reactivation of naive T-cells. Plays a role in the late stages of EGF-induced macropinocytosis through activation by PI(3)P. The sequence is that of Intermediate conductance calcium-activated potassium channel protein 4 from Rattus norvegicus (Rat).